Consider the following 383-residue polypeptide: Spermidine/putrescine import ATP-binding protein PotA (383 aa).

The 235-residue stretch at 12-246 (IALRDISKVY…PSTPFVAGFI (235 aa)) folds into the ABC transporter domain. Position 48 to 55 (48 to 55 (GPSGCGKT)) interacts with ATP.

Belongs to the ABC transporter superfamily. Spermidine/putrescine importer (TC 3.A.1.11.1) family. As to quaternary structure, the complex is composed of two ATP-binding proteins (PotA), two transmembrane proteins (PotB and PotC) and a solute-binding protein (PotD).

The protein localises to the cell membrane. The catalysed reaction is ATP + H2O + polyamine-[polyamine-binding protein]Side 1 = ADP + phosphate + polyamineSide 2 + [polyamine-binding protein]Side 1.. In terms of biological role, part of the ABC transporter complex PotABCD involved in spermidine/putrescine import. Responsible for energy coupling to the transport system. This Acidothermus cellulolyticus (strain ATCC 43068 / DSM 8971 / 11B) protein is Spermidine/putrescine import ATP-binding protein PotA.